The sequence spans 262 residues: UPF0758 protein R01728 (262 aa).

Residues 23-44 (PEKRTRNSPATAPAPATDTHYH) form a disordered region. A compositionally biased stretch (low complexity) spans 31–40 (PATAPAPATD). Positions 140–262 (VLSSWSAVID…HVSLKGLRLF (123 aa)) constitute an MPN domain. Zn(2+)-binding residues include His-211, His-213, and Asp-224. Positions 211–224 (HNHPSGDPTPSRAD) match the JAMM motif motif.

This sequence belongs to the UPF0758 family.

The sequence is that of UPF0758 protein R01728 from Rhizobium meliloti (strain 1021) (Ensifer meliloti).